The sequence spans 369 residues: MLLFTPGPVAINEEMRSSFSQPMPHHRTKDFEKIFQSVRENLKKMTGLEEVLLLSSSGTGAMEASVISLCQKELLFVNAGKFGERFGKIAKAHSIKAHELVYEWDTPAQVDGILNALKANPNIDAFCIQACESSGGLRHPVEKIAQAIKETNPNVFVIVDAITALGVEPLEITHVDALIGGSQKAFMLPPAMSLIALSQKAIDRIEERNVGFYFNLKSELKNQKNNTTSYTAPILHTLGLQRYFELVQNLGGFEALYQETKRVALASQKAVLALGLKIFPKSPSLSMTTIVSEHAKELKNLLKEKYQVQFAGGQEPYKDTLIRINHMGIIPVYKSAYALNALELALNDLDLREFDGMANTTFLKQYYEI.

Lysine 184 carries the post-translational modification N6-(pyridoxal phosphate)lysine.

It belongs to the class-V pyridoxal-phosphate-dependent aminotransferase family. The cofactor is pyridoxal 5'-phosphate.

This is an uncharacterized protein from Helicobacter pylori (strain J99 / ATCC 700824) (Campylobacter pylori J99).